Consider the following 250-residue polypeptide: Mediator of RNA polymerase II transcription subunit 6 (250 aa).

A disordered region spans residues 166-250 (KKREEEKKED…EPTARTTSKQ (85 aa)). Positions 204-223 (PAEDALEREEKEEVEEEEEE) are enriched in acidic residues. The span at 224 to 239 (TLKTEEPTTSTDEPKF) shows a compositional bias: basic and acidic residues.

The protein belongs to the Mediator complex subunit 6 family. In terms of assembly, component of the Mediator complex. Interacts with let-19/mdt-13. Interacts with RNA polymerase II. Interacts with mdt-28.

The protein localises to the nucleus. In terms of biological role, component of the Mediator complex, a coactivator involved in the regulated transcription of nearly all RNA polymerase II-dependent genes. Mediator functions as a bridge to convey information from gene-specific regulatory proteins to the basal RNA polymerase II transcription machinery. Mediator is recruited to promoters by direct interactions with regulatory proteins and serves as a scaffold for the assembly of a functional preinitiation complex with RNA polymerase II and the general transcription factors. Acts to repress beta-catenin target genes. Required for asymmetric division of T-cells and for gonad and germ cell development. The chain is Mediator of RNA polymerase II transcription subunit 6 (mdt-6) from Caenorhabditis elegans.